We begin with the raw amino-acid sequence, 480 residues long: uncharacterized protein (480 aa).

The helical transmembrane segment at 7–28 (HVISIFETFGAYFINIFYNFLY) threads the bilayer. Residues Asn73 and Asn195 are each glycosylated (N-linked (GlcNAc...) asparagine; by host). The stretch at 195–235 (NRSLLYQIEELTSEKKSLLAELSTLRKKYEKRQSEYRRLVQ) forms a coiled coil. Positions 297–332 (ELTSKSPSNYPVPQSRTIVSKPSDNYPVPQSRSSKI) are disordered. The segment covering 301-329 (KSPSNYPVPQSRTIVSKPSDNYPVPQSRS) has biased composition (polar residues). Asn455 carries an N-linked (GlcNAc...) asparagine; by host glycan.

It belongs to the asfivirus B475L family.

The protein resides in the host membrane. This is an uncharacterized protein from African swine fever virus (isolate Pig/Kenya/KEN-50/1950) (ASFV).